A 224-amino-acid chain; its full sequence is MSTELVEDEAQFYCKAQKYWKNVPATVDGMLGGYGHISNIDLNGSKKFLQRFLRQEGSNKTGNMYALDCGAGIGRITKRLLLPLFKKVDMVDVTDEFLSKAKSYLGEEGSRVGNYFCCGLQEFSPEPNRYDVIWIQWVIGHLTDEHLVDFLKRCSLGLRPNGIIVIKDNVTQDVSIMDDVDSSICRDIDLVRKLIKQAGLSLLAVERQENFPDEIYHVFSFAMR.

S-adenosyl-L-methionine contacts are provided by residues G70, R75, 92–94, 120–121, and Q136; these read DVT and LQ.

It belongs to the methyltransferase superfamily. NTM1 family.

It is found in the nucleus. It catalyses the reaction N-terminal L-alanyl-L-prolyl-L-lysyl-[protein] + 3 S-adenosyl-L-methionine = N-terminal N,N,N-trimethyl-L-alanyl-L-prolyl-L-lysyl-[protein] + 3 S-adenosyl-L-homocysteine + 3 H(+). It carries out the reaction N-terminal L-seryl-L-prolyl-L-lysyl-[protein] + 3 S-adenosyl-L-methionine = N-terminal N,N,N-trimethyl-L-seryl-L-prolyl-L-lysyl-[protein] + 3 S-adenosyl-L-homocysteine + 3 H(+). The catalysed reaction is N-terminal L-prolyl-L-prolyl-L-lysyl-[protein] + 2 S-adenosyl-L-methionine = N-terminal N,N-dimethyl-L-prolyl-L-prolyl-L-lysyl-[protein] + 2 S-adenosyl-L-homocysteine + 2 H(+). Its function is as follows. Distributive alpha-N-methyltransferase that methylates the N-terminus of target proteins containing the N-terminal motif [Ala/Gly/Pro/Ser]-Pro-Lys when the initiator Met is cleaved. Specifically catalyzes mono-, di- or tri-methylation of the exposed alpha-amino group of the Ala, Gly or Ser residue in the [Ala/Gly/Ser]-Pro-Lys motif and mono- or di-methylation of Pro in the Pro-Pro-Lys motif. Required during mitosis for normal bipolar spindle formation and chromosome segregation via its action on target proteins. In Xenopus tropicalis (Western clawed frog), this protein is N-terminal Xaa-Pro-Lys N-methyltransferase 1 (ntmt1).